The chain runs to 307 residues: Acetaldehyde dehydrogenase 1 (307 aa).

The active-site Acyl-thioester intermediate is the Cys132. Residues 163–171 and Asn274 contribute to the NAD(+) site; that span reads SVGPGTRKN.

It belongs to the acetaldehyde dehydrogenase family.

It catalyses the reaction acetaldehyde + NAD(+) + CoA = acetyl-CoA + NADH + H(+). This Comamonas testosteroni (Pseudomonas testosteroni) protein is Acetaldehyde dehydrogenase 1 (tesF).